The primary structure comprises 353 residues: A-kinase anchor protein 7 isoforms delta and gamma (353 aa).

Composition is skewed to basic and acidic residues over residues 1 to 22 (MERP…RGEE) and 66 to 76 (RSKENRGDRND). 2 disordered regions span residues 1–33 (MERP…SPVG) and 47–85 (DDCG…KKAK). AMP-binding positions include T134 and 224–226 (HLT). CMP contacts are provided by residues T134 and 224-226 (HLT). Positions 299-353 (AELVRLSKRLVENAVLKAVQQYLEETQNKKQPGEGNSVKAEEGDRNGDGSDNNRK) are PKA-RII-alpha subunit binding domain. Residues 300 to 324 (ELVRLSKRLVENAVLKAVQQYLEET) form an RI-alpha-binding region. The interval 301–314 (LVRLSKRLVENAVL) is RII-binding. A disordered region spans residues 321–353 (LEETQNKKQPGEGNSVKAEEGDRNGDGSDNNRK). A compositionally biased stretch (basic and acidic residues) spans 337–353 (KAEEGDRNGDGSDNNRK).

As to quaternary structure, binds cAMP-dependent protein kinase (PKA). Interacts with PRKCA; only the cytoplasmic form is capable of interacting with PRKCA. Expressed highly in the heart, and moderately in brain, lung, liver, kidney and testis. Hardly detectable in spleen and skeletal muscle. In kidney, isoform Delta is expressed in the principal cells of the IMCD.

The protein resides in the nucleus. The protein localises to the cytoplasm. It localises to the cell membrane. Its function is as follows. Probably targets cAMP-dependent protein kinase (PKA) to the cellular membrane or cytoskeletal structures. The membrane-associated form reduces epithelial sodium channel (ENaC) activity, whereas the free cytoplasmic form may negatively regulate ENaC channel feedback inhibition by intracellular sodium. Isoform Delta may be involved in shuttling aquaporin-2 (AQP2) to the plasma membrane. This is A-kinase anchor protein 7 isoforms delta and gamma from Rattus norvegicus (Rat).